The primary structure comprises 249 residues: Tetraspanin-18 (249 aa).

The Cytoplasmic portion of the chain corresponds to 1 to 13 (MEGDCLSCMKYLM). Residues 14-34 (FVFNFFIFLGGACLLGIGIWV) form a helical membrane-spanning segment. The Extracellular portion of the chain corresponds to 35–49 (MVDPTGFREIVAANP). A helical transmembrane segment spans residues 50–70 (LLITGAYILLAMGGLLFLLGF). Over 71–83 (LGCCGAVRENKCL) the chain is Cytoplasmic. The chain crosses the membrane as a helical span at residues 84–104 (LLFFFLFILIIFLAELSAAIL). Residues 105–223 (AFIFRGNLTR…AFETYVYLAG (119 aa)) are Extracellular-facing. N-linked (GlcNAc...) asparagine glycans are attached at residues asparagine 111 and asparagine 129. A helical transmembrane segment spans residues 224 to 244 (ALAIGVLAIELFAMIFAMCLF). Topologically, residues 245–249 (RGIIQ) are cytoplasmic.

This sequence belongs to the tetraspanin (TM4SF) family. Interacts with ORAI1; this interaction regulates ORAI1 exit from the endoplasmic (ER), and/or Golgi, and trafficking to the cell surface.

The protein resides in the membrane. Functionally, plays a role in the cell surface localization of ORAI1 and may participate in the regulation of Ca(2+) signaling and the VWF release in response to inflammatory stimuli. In Bos taurus (Bovine), this protein is Tetraspanin-18.